A 341-amino-acid chain; its full sequence is Serine proteinase inhibitor 2 (341 aa).

The protein belongs to the serpin family. Poxviruses subfamily.

The protein resides in the host cytoplasm. Viral serpin that inhibits both cysteine and serine proteinases involved in the regulation of host inflammatory and apoptosis processes. Major anti-apoptotic protein which inhibits both intrinsic and extrinsic pathways and strongly cleaves host CASP1 and CASP8 but is a rather poor inhibitor of host CASP3. Prevents the proteolytic activity of host interleukin-1-beta converting enzyme (ICE) and ICE-like enzymes. Can also block apoptosis through host tumor necrosis factor (TNF) receptor. This Bos taurus (Bovine) protein is Serine proteinase inhibitor 2 (OPG199).